The chain runs to 345 residues: Phosphoribosylformylglycinamidine cyclo-ligase (345 aa).

This sequence belongs to the AIR synthase family.

It is found in the cytoplasm. It carries out the reaction 2-formamido-N(1)-(5-O-phospho-beta-D-ribosyl)acetamidine + ATP = 5-amino-1-(5-phospho-beta-D-ribosyl)imidazole + ADP + phosphate + H(+). The protein operates within purine metabolism; IMP biosynthesis via de novo pathway; 5-amino-1-(5-phospho-D-ribosyl)imidazole from N(2)-formyl-N(1)-(5-phospho-D-ribosyl)glycinamide: step 2/2. This chain is Phosphoribosylformylglycinamidine cyclo-ligase, found in Shewanella baltica (strain OS223).